The chain runs to 33 residues: SLFSLIKAGAKFLGKNLLKQGACYAACKASKQC.

A disulfide bond links C27 and C33.

The protein belongs to the frog skin active peptide (FSAP) family. Brevinin subfamily. In terms of assembly, monomer. As to expression, expressed by the skin glands.

It localises to the secreted. In terms of biological role, has a non-hemolytic activity. Has a broad spectrum of activity against both Gram-positive and Gram-negative bacteria, fungi and protozoa. This is Gaegurin-1 (GGN1) from Glandirana rugosa (Japanese wrinkled frog).